The following is a 223-amino-acid chain: Putative UPF0607 protein LOC392364 (223 aa).

Positions 110 to 138 are enriched in basic and acidic residues; sequence KMEVRAEEPKEATEVKDQVETQEQEDNKR. Residues 110 to 223 form a disordered region; the sequence is KMEVRAEEPK…GRTPPARQHG (114 aa). Polar residues-rich tracts occupy residues 145–163 and 174–186; these read EAAS…TSPR and QLKS…QTDK.

Belongs to the UPF0607 family.

The sequence is that of Putative UPF0607 protein LOC392364 from Homo sapiens (Human).